The primary structure comprises 464 residues: Cysteine--tRNA ligase (464 aa).

Cys-29 is a Zn(2+) binding site. Residues 31 to 41 carry the 'HIGH' region motif; it reads ATVQGDPHIGH. Positions 207, 232, and 236 each coordinate Zn(2+). The 'KMSKS' region motif lies at 263–267; the sequence is KMSKS. Residue Lys-266 participates in ATP binding.

This sequence belongs to the class-I aminoacyl-tRNA synthetase family. Monomer. Zn(2+) is required as a cofactor.

It is found in the cytoplasm. It catalyses the reaction tRNA(Cys) + L-cysteine + ATP = L-cysteinyl-tRNA(Cys) + AMP + diphosphate. This Rhodococcus jostii (strain RHA1) protein is Cysteine--tRNA ligase.